Reading from the N-terminus, the 682-residue chain is Activating transcription factor 7-interacting protein 2 (682 aa).

The disordered stretch occupies residues 120 to 148; it reads SRTTESPSRVFTEEAKDSLNTSENDSEHQ. The span at 137 to 148 shows a compositional bias: polar residues; sequence SLNTSENDSEHQ. Residues 328-378 are a coiled coil; that stretch reads EIYSINYELFDKKLKELNQRIGKTECRNKHEGIADKLLAKIAKLQRRIKTV. The residue at position 416 (S416) is a Phosphoserine. Polar residues-rich tracts occupy residues 418–451 and 462–490; these read IEKS…VSES and ESPN…NSPN. Disordered regions lie at residues 418–491 and 513–538; these read IEKS…SPNA and NCNT…ETTP. A phosphoserine mark is found at S488 and S521. The segment covering 528–538 has biased composition (polar residues); the sequence is KAASNSKETTP. The 106-residue stretch at 575 to 680 folds into the Fibronectin type-III domain; sequence PPQKPELKVK…IKSIPGFSEN (106 aa).

The protein belongs to the MCAF family. Interacts with MBD1, SETDB1 and SP1. Probably forms a complex with SETDB1 and MBD1.

It localises to the nucleus. Its function is as follows. Recruiter that couples transcriptional factors to general transcription apparatus and thereby modulates transcription regulation and chromatin formation. Can both act as an activator or a repressor depending on the context. Mediates MBD1-dependent transcriptional repression, probably by recruiting complexes containing SETDB1. The complex formed with MBD1 and SETDB1 represses transcription and probably couples DNA methylation and histone H3 'Lys-9' trimethylation (H3K9me3) activity. The chain is Activating transcription factor 7-interacting protein 2 (ATF7IP2) from Homo sapiens (Human).